The sequence spans 718 residues: MIRSLSYCFLTIYFFLSILPLPNTIACPTRLLCRSDQRDALLEVQKELHVPTTTWNKNVDCCSWDGVTCDAILGELVLSRCKLQGEIPSSIGNLSHLTYLDLSNNQLVGEVPASIGNLNQLESMRLWDNDLKGNIPTSFANLTKLSELYLFGNQFTGGDTVLANLTSLSIIDLSLNYFKSSISADLSGLHNLERFSVYNNSFSGPFPLSLLMIPSLVHIDLSQNHFEGPIDFRNTFSLSRLRVLYVGFNNLDGLIPESISKLVNLEYLDVSHNNFGGQVPRSISKVVNLTSVDLSYNKLEGQVPDFVWRSSKLDYVDLSYNSFNCFAKSVEVIDGASLTMLNLGSNSVDGPFPKWICKVKDLYALDLSNNHFNGSIPQCLKYSTYFHTLNLRNNSLSGVLPNLFIKDSQLRSLDVSSNNLVGKLPKSLINCERIEFLNVKGNKIMDTFPFWLGSLPYLKVLMLGSNAFYGPVYNPSAYLGFPSIRIIDISNNNFVGSLPQDYFANWLEMSLVWSGSDIPQFKYMGNVNFSTYDSIDLVYKGVETDFDRIFEGFNAIDFSGNRFSGHIPGSIGLLSELRLLNLSGNAFTGNIPPSLANITNLESLDLSRNNLSGEIPISLGKLSFLSNTNFSYNHLEGLIPQSTQFATQNCSSFLGNLGLYGFREICGESHHVPVPTTSQQPEEPLSESEDQLLNWIAAAIAFGPGMFCGLVIGHIFTS.

Positions 1–26 (MIRSLSYCFLTIYFFLSILPLPNTIA) are cleaved as a signal peptide. The Extracellular portion of the chain corresponds to 27–695 (CPTRLLCRSD…SESEDQLLNW (669 aa)). LRR repeat units follow at residues 70–94 (DAILGELVLSRCKLQGEIPSSIGNL), 95–118 (SHLTYLDLSNNQLVGEVPASIGNL), 120–141 (QLESMRLWDNDLKGNIPTSFAN), 143–165 (TKLSELYLFGNQFTGGDTVLANL), 166–188 (TSLSIIDLSLNYFKSSISADLSG), 189–213 (LHNLERFSVYNNSFSGPFPLSLLMI), 214–238 (PSLVHIDLSQNHFEGPIDFRNTFSL), 239–261 (SRLRVLYVGFNNLDGLIPESISK), 262–286 (LVNLEYLDVSHNNFGGQVPRSISKV), 288–310 (NLTSVDLSYNKLEGQVPDFVWRS), 312–334 (KLDYVDLSYNSFNCFAKSVEVID), 335–359 (GASLTMLNLGSNSVDGPFPKWICKV), 360–383 (KDLYALDLSNNHFNGSIPQCLKYS), 384–406 (TYFHTLNLRNNSLSGVLPNLFIK), 407–431 (DSQLRSLDVSSNNLVGKLPKSLINC), 433–454 (RIEFLNVKGNKIMDTFPFWLGS), 455–480 (LPYLKVLMLGSNAFYGPVYNPSAYLG), and 481–505 (FPSIRIIDISNNNFVGSLPQDYFAN). Residue Asn93 is glycosylated (N-linked (GlcNAc...) asparagine). N-linked (GlcNAc...) asparagine glycans are attached at residues Asn141 and Asn164. A glycan (N-linked (GlcNAc...) asparagine) is linked at Asn199. Asn288 is a glycosylation site (N-linked (GlcNAc...) asparagine). 2 N-linked (GlcNAc...) asparagine glycosylation sites follow: Asn373 and Asn393. Asn528 is a glycosylation site (N-linked (GlcNAc...) asparagine). LRR repeat units follow at residues 550-574 (FEGFNAIDFSGNRFSGHIPGSIGLL), 575-598 (SELRLLNLSGNAFTGNIPPSLANI), 599-622 (TNLESLDLSRNNLSGEIPISLGKL), and 624-647 (FLSNTNFSYNHLEGLIPQSTQFAT). 5 N-linked (GlcNAc...) asparagine glycosylation sites follow: Asn581, Asn597, Asn610, Asn629, and Asn649. A helical membrane pass occupies residues 696 to 716 (IAAAIAFGPGMFCGLVIGHIF). The Cytoplasmic portion of the chain corresponds to 717 to 718 (TS).

It belongs to the RLP family.

It localises to the cell membrane. This is Receptor-like protein 36 from Arabidopsis thaliana (Mouse-ear cress).